The chain runs to 323 residues: Serine/threonine-protein kinase-transforming protein raf (323 aa).

The Protein kinase domain occupies 24–284 (VMLSTRIGSG…PQILSSIELL (261 aa)). ATP contacts are provided by residues 30 to 38 (IGSGSFGTV) and Lys-50. Asp-143 acts as the Proton acceptor in catalysis.

It belongs to the protein kinase superfamily. TKL Ser/Thr protein kinase family. RAF subfamily.

The enzyme catalyses L-seryl-[protein] + ATP = O-phospho-L-seryl-[protein] + ADP + H(+). It catalyses the reaction L-threonyl-[protein] + ATP = O-phospho-L-threonyl-[protein] + ADP + H(+). The protein is Serine/threonine-protein kinase-transforming protein raf (V-RAF) of Murine sarcoma virus 3611.